The following is a 295-amino-acid chain: Ribosomal RNA small subunit methyltransferase A (295 aa).

Asparagine 29, leucine 31, glycine 56, glutamate 77, aspartate 102, and asparagine 128 together coordinate S-adenosyl-L-methionine.

This sequence belongs to the class I-like SAM-binding methyltransferase superfamily. rRNA adenine N(6)-methyltransferase family. RsmA subfamily.

The protein resides in the cytoplasm. The catalysed reaction is adenosine(1518)/adenosine(1519) in 16S rRNA + 4 S-adenosyl-L-methionine = N(6)-dimethyladenosine(1518)/N(6)-dimethyladenosine(1519) in 16S rRNA + 4 S-adenosyl-L-homocysteine + 4 H(+). Specifically dimethylates two adjacent adenosines (A1518 and A1519) in the loop of a conserved hairpin near the 3'-end of 16S rRNA in the 30S particle. May play a critical role in biogenesis of 30S subunits. This is Ribosomal RNA small subunit methyltransferase A from Listeria welshimeri serovar 6b (strain ATCC 35897 / DSM 20650 / CCUG 15529 / CIP 8149 / NCTC 11857 / SLCC 5334 / V8).